A 483-amino-acid chain; its full sequence is Kynureninase 1 (483 aa).

Residues Leu-147, Thr-148, 175–178 (FPSD), Ser-232, Asp-261, His-264, and Tyr-286 each bind pyridoxal 5'-phosphate. Lys-287 bears the N6-(pyridoxal phosphate)lysine mark. Residues Trp-326 and Asn-354 each contribute to the pyridoxal 5'-phosphate site.

It belongs to the kynureninase family. In terms of assembly, homodimer. It depends on pyridoxal 5'-phosphate as a cofactor.

Its subcellular location is the cytoplasm. The enzyme catalyses L-kynurenine + H2O = anthranilate + L-alanine + H(+). The catalysed reaction is 3-hydroxy-L-kynurenine + H2O = 3-hydroxyanthranilate + L-alanine + H(+). Its pathway is amino-acid degradation; L-kynurenine degradation; L-alanine and anthranilate from L-kynurenine: step 1/1. The protein operates within cofactor biosynthesis; NAD(+) biosynthesis; quinolinate from L-kynurenine: step 2/3. Its function is as follows. Catalyzes the cleavage of L-kynurenine (L-Kyn) and L-3-hydroxykynurenine (L-3OHKyn) into anthranilic acid (AA) and 3-hydroxyanthranilic acid (3-OHAA), respectively. This chain is Kynureninase 1 (bna5-1), found in Aspergillus terreus (strain NIH 2624 / FGSC A1156).